The sequence spans 268 residues: Glutamine amidotransferase-like class 1 domain-containing protein 3, mitochondrial (268 aa).

The N-terminal 41 residues, 1 to 41 (MAAVRVLVASRLAAASAFTSLSPGGRTPSQRAALHLSVPRP), are a transit peptide targeting the mitochondrion. N6-acetyllysine is present on residues Lys151, Lys157, and Lys164. An N6-acetyllysine; alternate modification is found at Lys203. The residue at position 203 (Lys203) is an N6-succinyllysine; alternate. N6-acetyllysine is present on Lys219. 2 positions are modified to N6-acetyllysine; alternate: Lys223 and Lys233. Lys223 and Lys233 each carry N6-succinyllysine; alternate.

The protein belongs to the GATD3 family.

The protein localises to the mitochondrion. The polypeptide is Glutamine amidotransferase-like class 1 domain-containing protein 3, mitochondrial (Homo sapiens (Human)).